The sequence spans 476 residues: tRNA(Ile)-lysidine synthase (476 aa).

S30 to S35 contacts ATP.

The protein belongs to the tRNA(Ile)-lysidine synthase family.

It localises to the cytoplasm. It carries out the reaction cytidine(34) in tRNA(Ile2) + L-lysine + ATP = lysidine(34) in tRNA(Ile2) + AMP + diphosphate + H(+). In terms of biological role, ligates lysine onto the cytidine present at position 34 of the AUA codon-specific tRNA(Ile) that contains the anticodon CAU, in an ATP-dependent manner. Cytidine is converted to lysidine, thus changing the amino acid specificity of the tRNA from methionine to isoleucine. The chain is tRNA(Ile)-lysidine synthase from Bacillus cereus (strain ZK / E33L).